A 449-amino-acid polypeptide reads, in one-letter code: Heterogeneous nuclear ribonucleoprotein H (449 aa).

Met1 carries the N-acetylmethionine modification. The residue at position 2 (Met2) is an N-acetylmethionine; in Heterogeneous nuclear ribonucleoprotein H, N-terminally processed. The RRM 1 domain maps to 11–90 (FVVKVRGLPW…RYVEVFKSNN (80 aa)). Phosphoserine is present on Ser23. Lys35 participates in a covalent cross-link: Glycyl lysine isopeptide (Lys-Gly) (interchain with G-Cter in SUMO2). 2 positions are modified to phosphoserine: Ser54 and Ser63. Glycyl lysine isopeptide (Lys-Gly) (interchain with G-Cter in SUMO2) cross-links involve residues Lys87 and Lys98. An RRM 2 domain is found at 111–188 (GFVRLRGLPF…RYIEIFKSSR (78 aa)). At Arg233 the chain carries Dimethylated arginine; alternate. At Arg233 the chain carries Omega-N-methylarginine; alternate. A 1-1 repeat occupies 234–249 (GAYGGGYGGYDDYNGY). A 2 X 16 AA Gly-rich approximate repeats region spans residues 234–433 (GAYGGGYGGY…YGGQSSMSGY (200 aa)). Tyr246 bears the Phosphotyrosine mark. The 76-residue stretch at 289–364 (HCVHMRGLPY…RYVELFLNST (76 aa)) folds into the RRM 3 domain. Ser310 carries the phosphoserine modification. 3 consecutive repeat copies span residues 354 to 372 (HRYV…GGAY), 374 to 392 (HRYV…GGAY), and 418 to 433 (GGYG…MSGY). A 2 X 19 AA perfect repeats region spans residues 354 to 392 (HRYVELFLNSTAGASGGAYEHRYVELFLNSTAGASGGAY).

In terms of assembly, part of a ternary complex containing FUBP2, PTBP1, PTBP2 and HNRNPH1. Identified in the spliceosome C complex. Interacts with IGF2BP1. Interacts with CUGBP1; the interaction is RNA-dependent. Interacts with MBNL1; the interaction in RNA-independent.

The protein localises to the nucleus. It localises to the nucleoplasm. Its function is as follows. This protein is a component of the heterogeneous nuclear ribonucleoprotein (hnRNP) complexes which provide the substrate for the processing events that pre-mRNAs undergo before becoming functional, translatable mRNAs in the cytoplasm. Mediates pre-mRNA alternative splicing regulation. Inhibits, together with CUGBP1, insulin receptor (IR) pre-mRNA exon 11 inclusion in myoblast. Binds to the IR RNA. Binds poly(RG). The sequence is that of Heterogeneous nuclear ribonucleoprotein H (Hnrnph1) from Rattus norvegicus (Rat).